Here is a 443-residue protein sequence, read N- to C-terminus: Chromosomal replication initiator protein DnaA (443 aa).

A domain I, interacts with DnaA modulators region spans residues 1 to 67; that stretch reads MDAWSRSLER…RELLAHFAGF (67 aa). Positions 67–105 are domain II; sequence FSDVFLEIGSRPRPVEAQNAPVSTPSAHVSSEPQVPFAG. The domain III, AAA+ region stretch occupies residues 106-323; sequence NLDNHYTFAN…GALNTLTARA (218 aa). Residues glycine 151, glycine 153, lysine 154, and threonine 155 each contribute to the ATP site. Positions 324 to 443 are domain IV, binds dsDNA; it reads NFTGRAITTE…WDKLIRKLSE (120 aa).

This sequence belongs to the DnaA family. As to quaternary structure, oligomerizes as a right-handed, spiral filament on DNA at oriC.

The protein localises to the cytoplasm. Functionally, plays an essential role in the initiation and regulation of chromosomal replication. ATP-DnaA binds to the origin of replication (oriC) to initiate formation of the DNA replication initiation complex once per cell cycle. Binds the DnaA box (a 9 base pair repeat at the origin) and separates the double-stranded (ds)DNA. Forms a right-handed helical filament on oriC DNA; dsDNA binds to the exterior of the filament while single-stranded (ss)DNA is stabiized in the filament's interior. The ATP-DnaA-oriC complex binds and stabilizes one strand of the AT-rich DNA unwinding element (DUE), permitting loading of DNA polymerase. After initiation quickly degrades to an ADP-DnaA complex that is not apt for DNA replication. Binds acidic phospholipids. The polypeptide is Chromosomal replication initiator protein DnaA (Stenotrophomonas maltophilia (strain K279a)).